A 314-amino-acid polypeptide reads, in one-letter code: Ribosomal RNA small subunit methyltransferase H (314 aa).

S-adenosyl-L-methionine-binding positions include 37–39 (GSH), aspartate 57, phenylalanine 84, aspartate 105, and glutamine 112.

It belongs to the methyltransferase superfamily. RsmH family.

It localises to the cytoplasm. The enzyme catalyses cytidine(1402) in 16S rRNA + S-adenosyl-L-methionine = N(4)-methylcytidine(1402) in 16S rRNA + S-adenosyl-L-homocysteine + H(+). Specifically methylates the N4 position of cytidine in position 1402 (C1402) of 16S rRNA. In Fusobacterium nucleatum subsp. nucleatum (strain ATCC 25586 / DSM 15643 / BCRC 10681 / CIP 101130 / JCM 8532 / KCTC 2640 / LMG 13131 / VPI 4355), this protein is Ribosomal RNA small subunit methyltransferase H.